Reading from the N-terminus, the 314-residue chain is Bifunctional pinoresinol-lariciresinol reductase (314 aa).

NADP(+) contacts are provided by residues 10–16, R35, and K44; that span reads GGTGYIG. K138 acts as the Proton acceptor in catalysis. R142 provides a ligand contact to NADP(+). H270 lines the substrate pocket.

This sequence belongs to the NmrA-type oxidoreductase family. Isoflavone reductase subfamily. Dimer.

The catalysed reaction is (+)-lariciresinol + NADP(+) = (+)-pinoresinol + NADPH + H(+). The enzyme catalyses (+)-secoisolariciresinol + NADP(+) = (-)-lariciresinol + NADPH + H(+). In terms of biological role, reductase involved in the lignan justicidin B biosynthesis. Catalyzes the enantioselective conversion of (+)-pinoresinol into (+)-lariciresinol and of (-)-lariciresinol into (+)-secoisolariciresinol. Low activity with the other enantiomers. Abstracts the 4R-hydride from the NADPH cofactor during catalysis. In Linum perenne (Perennial flax), this protein is Bifunctional pinoresinol-lariciresinol reductase (PLR_Lp1).